We begin with the raw amino-acid sequence, 802 residues long: Leucine--tRNA ligase (802 aa).

The 'HIGH' region signature appears at 40–51 (PYPSGAGLHVGH). Residues 576–580 (KMSKS) carry the 'KMSKS' region motif. Lys579 lines the ATP pocket.

Belongs to the class-I aminoacyl-tRNA synthetase family.

It is found in the cytoplasm. It catalyses the reaction tRNA(Leu) + L-leucine + ATP = L-leucyl-tRNA(Leu) + AMP + diphosphate. The polypeptide is Leucine--tRNA ligase (Bacillus anthracis (strain A0248)).